A 381-amino-acid polypeptide reads, in one-letter code: Deoxyguanosinetriphosphate triphosphohydrolase-like protein (381 aa).

The 128-residue stretch at 76–203 folds into the HD domain; it reads RMTHTLEVAG…ADLSDEIAYT (128 aa).

Belongs to the dGTPase family. Type 2 subfamily.

The sequence is that of Deoxyguanosinetriphosphate triphosphohydrolase-like protein from Leptospira borgpetersenii serovar Hardjo-bovis (strain JB197).